A 531-amino-acid chain; its full sequence is Tubulin-folding cofactor E (531 aa).

The 45-residue stretch at glycine 32–arginine 76 folds into the CAP-Gly domain. 9 LRR repeats span residues isoleucine 84–leucine 109, leucine 159–glutamate 183, leucine 185–valine 213, leucine 233–aspartate 256, phenylalanine 260–glutamine 284, leucine 285–threonine 308, phenylalanine 318–glycine 342, proline 344–arginine 366, and valine 474–glutamine 497.

The protein belongs to the TBCE family. In terms of assembly, supercomplex made of cofactors A to E. Cofactors A and D function by capturing and stabilizing tubulin in a quasi-native conformation. Cofactor E binds to the cofactor D-tubulin complex; interaction with cofactor C then causes the release of tubulin polypeptides that are committed to the native state.

It is found in the cytoplasm. Functionally, essential tubulin-folding protein involved in the tubulin folding pathway. Not essential for cell viability. Probably involved in the binding of alpha-tubulin in the multimeric supercomplex. The chain is Tubulin-folding cofactor E (TFCE) from Arabidopsis thaliana (Mouse-ear cress).